A 181-amino-acid polypeptide reads, in one-letter code: MALRPAKIDRYVDKPAYTRREYIRGAPGPKITIFDMGNPAGDFEFEVALHTAEPVQIRQNALEAARQQVNRYLQKNVGRSNYHFKIRVYPFQVLRENPMATGRKADRYGNGMRRPFGKPIGLAARLKRDQKILSIRVNRQHLKFAIEGARRAAMKFPCKCYYRIYDKEGNDVTTKILSQGL.

It belongs to the universal ribosomal protein uL16 family.

This Pyrococcus horikoshii (strain ATCC 700860 / DSM 12428 / JCM 9974 / NBRC 100139 / OT-3) protein is Large ribosomal subunit protein uL16.